Reading from the N-terminus, the 186-residue chain is Ribosome-recycling factor (186 aa).

Belongs to the RRF family.

It is found in the cytoplasm. Functionally, responsible for the release of ribosomes from messenger RNA at the termination of protein biosynthesis. May increase the efficiency of translation by recycling ribosomes from one round of translation to another. The polypeptide is Ribosome-recycling factor (Brucella melitensis biotype 2 (strain ATCC 23457)).